A 953-amino-acid polypeptide reads, in one-letter code: MKSRSLKLREAHKVGGSAAFCSILWDHKAEHFVTSSSSDPSISVHDGLSTSTLPPTILRHHQDGVTSLALSNDSTLLASGSIDHCVKLYKFPSGEFQTNITRFTLPIRVLAFNGSGSLLAAAGDDEGIKLINTFDGSIVRVLKGHKGPVTGLDFHPNGELLASIDTTGTVLCWELQNGVVSFTLKGVAPDTGFNTSIVNIPRWSPDGRTLAVPGLRNDVVMYDRFTGEKLFALRGDHLEAICYLTWAPNGKYIATSGLDKQVLLWDVDKKQDIDRHKFEERICCMSWKPNGNALSVIDAKGRYGVWESLVPSSMLSPTVGVPDIVPKKRNEILDFDDEVEEEIYRASESLDDAMGDSDDGESHHTSRKRLRKKTLIDEDVDDAYEELNDGSSLPSASEYRKKSHRGHREKQGARSGAFKGISASTKYKMQSSFQPGATPPEPGKRTFLCYNMLGCITTIEHEGNSRIETDFHDTGRGPRVSSMIDIYGFTMASINETGCVFANPCKGEKNMSVLMYRPFRSWASNSEWTMRFEGEEVKVVANGSGWVAAVTSLNLLRVFSEGGLQKHILSLDGPVVTAVGCKDHLAVVTHVSDCLPSNEQVMEFRVFNISKMTQELKGRVALTPGSRLTWIGFSEEGSLSSYDSEGVLRVFTSQYGGSWIPVFSTSKEKKQEENYWVVGLNTSSLYCIACKYAEMFPQVTPKPILTILDLSLPLASSDLGAASLENELILKQLRLYETQRKVDDMALVGVDTTALEDEAFDLEVSQDKCILRLISSCCSSDSFARASELMELLTLEKSMRAAITLVTKLKLPFLAEKFSSILEERLLEEASEAAVTNPALNPNGEVVTRVESKVQNPPASIQTSENTEAVMKSSATKLSAPTLLKKSKVSEGLKLGKEQTKKDKSDDAKIKEIKKLNLKNPVNNVNKEDKGQEKEVNQGEARRSSNPFLKSTV.

7 WD repeats span residues 15 to 55 (GGSA…TLPP), 60 to 99 (HHQD…FQTN), 102 to 143 (RFTL…RVLK), 144 to 183 (GHKG…VSFT), 192 to 232 (GFNT…KLFA), 236 to 275 (DHLE…DIDR), and 277 to 316 (KFEE…SMLS). Disordered stretches follow at residues 347–370 (SESL…RKRL), 385–419 (EELN…GAFK), and 851–877 (ESKV…SATK). The span at 349–359 (SLDDAMGDSDD) shows a compositional bias: acidic residues. Polar residues predominate over residues 853–877 (KVQNPPASIQTSENTEAVMKSSATK). Residues 900–907 (TKKDKSDD) carry the Nuclear localization signal motif. Positions 919 to 953 (KNPVNNVNKEDKGQEKEVNQGEARRSSNPFLKSTV) are disordered. A compositionally biased stretch (basic and acidic residues) spans 926 to 943 (NKEDKGQEKEVNQGEARR). The segment covering 944–953 (SSNPFLKSTV) has biased composition (polar residues).

As to quaternary structure, interacts with EZA1/SWN, LHP1, SLD5 and CLF in the nucleus. In terms of tissue distribution, expressed in root meristematic zones, initiating lateral roots, young leaves and the shoot apex.

The protein resides in the nucleus. Functionally, participates in maintaining the H3K27me3 mark at target genes by interacting with LHP1-PRC2 complexes during replication, thus contributing to H3K27me3 inheritance. This chain is Protein ENHANCER OF LHP1 1, found in Arabidopsis thaliana (Mouse-ear cress).